The primary structure comprises 230 residues: Ribosomal RNA large subunit methyltransferase E (230 aa).

Positions 82, 84, 100, 116, and 140 each coordinate S-adenosyl-L-methionine. Catalysis depends on K180, which acts as the Proton acceptor.

The protein belongs to the class I-like SAM-binding methyltransferase superfamily. RNA methyltransferase RlmE family.

The protein resides in the cytoplasm. The catalysed reaction is uridine(2552) in 23S rRNA + S-adenosyl-L-methionine = 2'-O-methyluridine(2552) in 23S rRNA + S-adenosyl-L-homocysteine + H(+). Specifically methylates the uridine in position 2552 of 23S rRNA at the 2'-O position of the ribose in the fully assembled 50S ribosomal subunit. The protein is Ribosomal RNA large subunit methyltransferase E of Granulibacter bethesdensis (strain ATCC BAA-1260 / CGDNIH1).